The following is a 374-amino-acid chain: tRNA-specific 2-thiouridylase MnmA (374 aa).

ATP is bound by residues 12–19 (GMSGGVDS) and Met-38. The tract at residues 98 to 100 (NPD) is interaction with target base in tRNA. The Nucleophile role is filled by Cys-103. A disulfide bridge connects residues Cys-103 and Cys-202. Gly-128 is a binding site for ATP. An interaction with tRNA region spans residues 152-154 (KDQ). Residue Cys-202 is the Cysteine persulfide intermediate of the active site. The interval 316 to 317 (RY) is interaction with tRNA.

It belongs to the MnmA/TRMU family.

It localises to the cytoplasm. It carries out the reaction S-sulfanyl-L-cysteinyl-[protein] + uridine(34) in tRNA + AH2 + ATP = 2-thiouridine(34) in tRNA + L-cysteinyl-[protein] + A + AMP + diphosphate + H(+). Functionally, catalyzes the 2-thiolation of uridine at the wobble position (U34) of tRNA, leading to the formation of s(2)U34. The sequence is that of tRNA-specific 2-thiouridylase MnmA from Vibrio vulnificus (strain CMCP6).